We begin with the raw amino-acid sequence, 161 residues long: Regulator of ribonuclease activity A (161 aa).

Belongs to the RraA family. Homotrimer. Binds to both RNA-binding sites in the C-terminal region of Rne and to RhlB.

The protein localises to the cytoplasm. Functionally, globally modulates RNA abundance by binding to RNase E (Rne) and regulating its endonucleolytic activity. Can modulate Rne action in a substrate-dependent manner by altering the composition of the degradosome. Modulates RNA-binding and helicase activities of the degradosome. The sequence is that of Regulator of ribonuclease activity A from Cronobacter sakazakii (strain ATCC BAA-894) (Enterobacter sakazakii).